Here is a 229-residue protein sequence, read N- to C-terminus: MAKKSKQLCAALEKIDSTKAYSVEEAVALAKETNFAKFDATVEVAYNLNIDVKKADQQIRGAMVLPNGTGKTSRVLVFARGAKAEEAKAAGADFVGEDDLVAKINDGWLDFDVVIATPDMMALVGRLGRVLGPRNLMPNPKTGTVTMDVAKAVEESKGGKITYRADRAGNVQAIIGKVSFEAEKLVENFKAFNETIQKAKPATAKGTYVTNLTITTTQGVGIKVDVNSL.

This sequence belongs to the universal ribosomal protein uL1 family. As to quaternary structure, part of the 50S ribosomal subunit.

In terms of biological role, binds directly to 23S rRNA. The L1 stalk is quite mobile in the ribosome, and is involved in E site tRNA release. Functionally, protein L1 is also a translational repressor protein, it controls the translation of the L11 operon by binding to its mRNA. The sequence is that of Large ribosomal subunit protein uL1 from Streptococcus pneumoniae (strain Taiwan19F-14).